A 94-amino-acid chain; its full sequence is Co-chaperonin GroES (94 aa).

The protein belongs to the GroES chaperonin family. In terms of assembly, heptamer of 7 subunits arranged in a ring. Interacts with the chaperonin GroEL.

The protein localises to the cytoplasm. In terms of biological role, together with the chaperonin GroEL, plays an essential role in assisting protein folding. The GroEL-GroES system forms a nano-cage that allows encapsulation of the non-native substrate proteins and provides a physical environment optimized to promote and accelerate protein folding. GroES binds to the apical surface of the GroEL ring, thereby capping the opening of the GroEL channel. In Streptococcus oralis, this protein is Co-chaperonin GroES.